We begin with the raw amino-acid sequence, 485 residues long: Protein nucleotidyltransferase YdiU (485 aa).

Glycine 90, glycine 92, arginine 93, lysine 113, aspartate 125, glycine 126, arginine 176, and arginine 183 together coordinate ATP. Aspartate 252 serves as the catalytic Proton acceptor. Positions 253 and 262 each coordinate Mg(2+). An ATP-binding site is contributed by aspartate 262.

It belongs to the SELO family. It depends on Mg(2+) as a cofactor. Mn(2+) serves as cofactor.

It carries out the reaction L-seryl-[protein] + ATP = 3-O-(5'-adenylyl)-L-seryl-[protein] + diphosphate. It catalyses the reaction L-threonyl-[protein] + ATP = 3-O-(5'-adenylyl)-L-threonyl-[protein] + diphosphate. The enzyme catalyses L-tyrosyl-[protein] + ATP = O-(5'-adenylyl)-L-tyrosyl-[protein] + diphosphate. The catalysed reaction is L-histidyl-[protein] + UTP = N(tele)-(5'-uridylyl)-L-histidyl-[protein] + diphosphate. It carries out the reaction L-seryl-[protein] + UTP = O-(5'-uridylyl)-L-seryl-[protein] + diphosphate. It catalyses the reaction L-tyrosyl-[protein] + UTP = O-(5'-uridylyl)-L-tyrosyl-[protein] + diphosphate. Functionally, nucleotidyltransferase involved in the post-translational modification of proteins. It can catalyze the addition of adenosine monophosphate (AMP) or uridine monophosphate (UMP) to a protein, resulting in modifications known as AMPylation and UMPylation. This Aliivibrio fischeri (strain MJ11) (Vibrio fischeri) protein is Protein nucleotidyltransferase YdiU.